The following is a 306-amino-acid chain: tRNA dimethylallyltransferase 2 (306 aa).

11–18 contributes to the ATP binding site; that stretch reads GPTASGKT. A substrate-binding site is contributed by 13-18; that stretch reads TASGKT. The tract at residues 36 to 39 is interaction with substrate tRNA; that stretch reads DSRQ.

It belongs to the IPP transferase family. Monomer. Mg(2+) serves as cofactor.

The enzyme catalyses adenosine(37) in tRNA + dimethylallyl diphosphate = N(6)-dimethylallyladenosine(37) in tRNA + diphosphate. Catalyzes the transfer of a dimethylallyl group onto the adenine at position 37 in tRNAs that read codons beginning with uridine, leading to the formation of N6-(dimethylallyl)adenosine (i(6)A). This Bacteroides thetaiotaomicron (strain ATCC 29148 / DSM 2079 / JCM 5827 / CCUG 10774 / NCTC 10582 / VPI-5482 / E50) protein is tRNA dimethylallyltransferase 2.